Reading from the N-terminus, the 330-residue chain is G-protein coupled receptor 3 (330 aa).

Over 1–42 the chain is Extracellular; it reads MMWGAGSPLAWLSAGSGNVNVSSVGPAEGPTGPAAPLPSPKA. An N-linked (GlcNAc...) asparagine glycan is attached at Asn20. The helical transmembrane segment at 43-62 threads the bilayer; the sequence is WDVVLCISGTLVSCENALVV. Topologically, residues 63–74 are cytoplasmic; it reads AIIVGTPAFRAP. Residues 75 to 98 traverse the membrane as a helical segment; sequence MFLLVGSLAVADLLAGLGLVLHFA. The Extracellular segment spans residues 99–110; it reads AVFCIGSAEMSL. The helical transmembrane segment at 111–132 threads the bilayer; sequence VLVGVLAMAFTASIGSLLAITV. Over 133–153 the chain is Cytoplasmic; sequence DRYLSLYNALTYYSETTVTRT. The chain crosses the membrane as a helical span at residues 154 to 173; sequence YVMLALVWGGALGLGLLPVL. The Extracellular segment spans residues 174-198; that stretch reads AWNCLDGLTTCGVVYPLSKNHLVVL. The helical transmembrane segment at 199-217 threads the bilayer; sequence AIAFFMVFGIMLQLYAQIC. Over 218–245 the chain is Cytoplasmic; the sequence is RIVCRHAQQIALQRHLLPASHYVATRKG. Residues 246-272 traverse the membrane as a helical segment; it reads IATLAVVLGAFAACWLPFTVYCLLGDA. Topologically, residues 273-277 are extracellular; that stretch reads HSPPL. The helical transmembrane segment at 278-299 threads the bilayer; sequence YTYLTLLPATYNSMINPIIYAF. The Cytoplasmic portion of the chain corresponds to 300–330; the sequence is RNQDVQKVLWAVCCCCSSSKIPFRSRSPSDV. The S-palmitoyl cysteine moiety is linked to residue Cys313. A phosphoserine mark is found at Ser324, Ser326, and Ser328.

The protein belongs to the G-protein coupled receptor 1 family. As to expression, expressed predominantly in the central nervous system, and at low levels in the lung, kidney, testis, ovary and eye. Highly expressed in regions of the brain implicated in the Alzheimer disease.

It localises to the cell membrane. In terms of biological role, constitutively active G-protein coupled receptor that maintains high 3'-5'-cyclic adenosine monophosphate (cAMP) levels that a plays a role in serveral processes including meiotic arrest in oocytes or neuronal development via activation of numerous intracellular signaling pathways. Acts as an essential activator of thermogenic adipocytes and drives thermogenesis via its intrinsic G(s)-coupling activity without the requirement of a ligand. Has a potential role in modulating a number of brain functions, including behavioral responses to stress, amyloid-beta peptide generation in neurons. Stimulates neurite outgrowth in cerebellar granular neurons modulated via PKA, ERK, and most strongly PI3K-mediated signaling pathways. In Homo sapiens (Human), this protein is G-protein coupled receptor 3 (GPR3).